The following is a 307-amino-acid chain: Glycerol-3-phosphate dehydrogenase [NAD(P)+] (307 aa).

Residues phenylalanine 11, arginine 31, and lysine 95 each contribute to the NADPH site. Sn-glycerol 3-phosphate contacts are provided by lysine 95, glycine 121, and serine 123. Residue alanine 125 coordinates NADPH. Positions 176, 229, 239, 240, and 241 each coordinate sn-glycerol 3-phosphate. Residue lysine 176 is the Proton acceptor of the active site. Arginine 240 contacts NADPH. Residue glutamate 261 participates in NADPH binding.

This sequence belongs to the NAD-dependent glycerol-3-phosphate dehydrogenase family.

The protein localises to the cytoplasm. The enzyme catalyses sn-glycerol 3-phosphate + NAD(+) = dihydroxyacetone phosphate + NADH + H(+). The catalysed reaction is sn-glycerol 3-phosphate + NADP(+) = dihydroxyacetone phosphate + NADPH + H(+). Its pathway is membrane lipid metabolism; glycerophospholipid metabolism. Catalyzes the reduction of the glycolytic intermediate dihydroxyacetone phosphate (DHAP) to sn-glycerol 3-phosphate (G3P), the key precursor for phospholipid synthesis. This is Glycerol-3-phosphate dehydrogenase [NAD(P)+] from Jannaschia sp. (strain CCS1).